We begin with the raw amino-acid sequence, 669 residues long: DNA ligase (669 aa).

NAD(+) contacts are provided by residues 32–36 (DAEYD), 81–82 (SL), and Glu111. The active-site N6-AMP-lysine intermediate is Lys113. 4 residues coordinate NAD(+): Arg134, Glu171, Lys290, and Lys314. Zn(2+) contacts are provided by Cys408, Cys411, Cys426, and Cys432. Positions 591 to 669 (EEALSLKGQT…EAELLAILGS (79 aa)) constitute a BRCT domain.

This sequence belongs to the NAD-dependent DNA ligase family. LigA subfamily. The cofactor is Mg(2+). Requires Mn(2+) as cofactor.

The enzyme catalyses NAD(+) + (deoxyribonucleotide)n-3'-hydroxyl + 5'-phospho-(deoxyribonucleotide)m = (deoxyribonucleotide)n+m + AMP + beta-nicotinamide D-nucleotide.. Functionally, DNA ligase that catalyzes the formation of phosphodiester linkages between 5'-phosphoryl and 3'-hydroxyl groups in double-stranded DNA using NAD as a coenzyme and as the energy source for the reaction. It is essential for DNA replication and repair of damaged DNA. This is DNA ligase from Shewanella loihica (strain ATCC BAA-1088 / PV-4).